The chain runs to 475 residues: MATAEAQIGVNRNLQKQDLSNLDVSKLTPLSPEVISRQATINIGTIGHVAHGKSTVVKAISGVQTVRFKNELERNITIKLGYANAKIYKCDNPKCPRPASFVSDASSKDDSLPCTRLNCSGNFRLVRHVSFVDCPGHDILMATMLNGAAVMDAALLLIAGNESCPQPQTSEHLAAIEIMKLKQILILQNKIDLIKESQAKEQYEEITKFVQGTVAEGAPIIPISAQLKYNIDVLCEYIVNKIPVPPRDFNAPPRLIVIRSFDVNKPGCEVADLKGGVAGGSILSGVLKVGQEIEVRPGVVTKDSDGNITCRPIFSRIVSLFAEQNELQYAVPGGLIGVGTKIDPTLCRADRLVGQVLGAVGQLPDIYQELEISYYLLRRLLGVRTDGDKKGARVEKLQKNEILLVNIGSLSTGGRISATKGDLAKIVLTTPVCTEKGEKIALSRRVENHWRLIGWGQIFGGKTITPVLDSQVAKK.

One can recognise a tr-type G domain in the interval 38 to 247; sequence QATINIGTIG…IVNKIPVPPR (210 aa). Residues 47–54 are G1; it reads GHVAHGKS. Residue 50–55 participates in GTP binding; the sequence is AHGKST. The G2 stretch occupies residues 75–79; sequence NITIK. The segment at 133 to 136 is G3; that stretch reads DCPG. Residues 189–192 and 224–226 contribute to the GTP site; these read NKID and SAQ. Positions 189–192 are G4; it reads NKID. Residues 224–226 form a G5 region; that stretch reads SAQ. An interacts with CDC123 region spans residues 456–468; it reads GQIFGGKTITPVL.

It belongs to the TRAFAC class translation factor GTPase superfamily. Classic translation factor GTPase family. EIF2G subfamily. As to quaternary structure, eukaryotic translation initiation factor 2 eIF2 is a heterotrimeric complex composed of an alpha, a beta and a gamma subunit. The factors eIF-1, eIF-2, eIF-3, TIF5/eIF-5 and methionyl-tRNAi form a multifactor complex (MFC) that may bind to the 40S ribosome.

The protein resides in the cytoplasm. It is found in the cytosol. It carries out the reaction GTP + H2O = GDP + phosphate + H(+). In terms of biological role, as a subunit of eukaryotic initiation factor 2 eIF2, involved in the early steps of protein synthesis. In the presence of GTP, eIF-2 forms a ternary complex with initiator tRNA Met-tRNAi and then recruits the 40S ribosomal complex and initiation factors eIF-1, eIF-1A and eIF-3 to form the 43S pre-initiation complex (43S PIC), a step that determines the rate of protein translation. The 43S PIC binds to mRNA and scans downstream to the initiation codon, where it forms a 48S initiation complex by codon-anticodon base pairing. This leads to the displacement of eIF-1 to allow GTPase-activating protein (GAP) eIF-5-mediated hydrolysis of eIF2-bound GTP. Hydrolysis of GTP and release of Pi, which makes GTP hydrolysis irreversible, causes the release of the eIF-2-GDP binary complex from the 40S subunit, an event that is essential for the subsequent joining of the 60S ribosomal subunit to form an elongation-competent 80S ribosome. In order for eIF-2 to recycle and catalyze another round of initiation, the GDP bound to eIF-2 must be exchanged with GTP by way of a reaction catalyzed by GDP-GTP exchange factor (GEF) eIF-2B. The chain is Eukaryotic translation initiation factor 2 subunit 3 from Drosophila melanogaster (Fruit fly).